Consider the following 196-residue polypeptide: Glycerol-3-phosphate acyltransferase (196 aa).

Transmembrane regions (helical) follow at residues 2–22 (GWWL…SYLI), 51–71 (VVGG…VFIA), 80–100 (LVSL…FMKF), 112–132 (IIFC…LVIV), and 137–156 (YASL…GYLF).

This sequence belongs to the PlsY family. In terms of assembly, probably interacts with PlsX.

Its subcellular location is the cell inner membrane. It carries out the reaction an acyl phosphate + sn-glycerol 3-phosphate = a 1-acyl-sn-glycero-3-phosphate + phosphate. The protein operates within lipid metabolism; phospholipid metabolism. In terms of biological role, catalyzes the transfer of an acyl group from acyl-phosphate (acyl-PO(4)) to glycerol-3-phosphate (G3P) to form lysophosphatidic acid (LPA). This enzyme utilizes acyl-phosphate as fatty acyl donor, but not acyl-CoA or acyl-ACP. The sequence is that of Glycerol-3-phosphate acyltransferase from Thermotoga petrophila (strain ATCC BAA-488 / DSM 13995 / JCM 10881 / RKU-1).